Here is a 255-residue protein sequence, read N- to C-terminus: Indole-3-glycerol phosphate synthase (255 aa).

The protein belongs to the TrpC family.

The enzyme catalyses 1-(2-carboxyphenylamino)-1-deoxy-D-ribulose 5-phosphate + H(+) = (1S,2R)-1-C-(indol-3-yl)glycerol 3-phosphate + CO2 + H2O. It functions in the pathway amino-acid biosynthesis; L-tryptophan biosynthesis; L-tryptophan from chorismate: step 4/5. In Streptococcus pneumoniae (strain Taiwan19F-14), this protein is Indole-3-glycerol phosphate synthase.